The sequence spans 275 residues: Shikimate dehydrogenase (NADP(+)) (275 aa).

Shikimate contacts are provided by residues 17-19 and threonine 64; that span reads SKS. Lysine 68 acts as the Proton acceptor in catalysis. An NADP(+)-binding site is contributed by glutamate 80. Residues asparagine 89 and aspartate 105 each contribute to the shikimate site. NADP(+) is bound by residues 129-133, 152-157, and methionine 216; these read GAGGA and NRTFFK. Tyrosine 218 lines the shikimate pocket. Position 240 (glycine 240) interacts with NADP(+).

This sequence belongs to the shikimate dehydrogenase family. Homodimer.

It catalyses the reaction shikimate + NADP(+) = 3-dehydroshikimate + NADPH + H(+). The protein operates within metabolic intermediate biosynthesis; chorismate biosynthesis; chorismate from D-erythrose 4-phosphate and phosphoenolpyruvate: step 4/7. Functionally, involved in the biosynthesis of the chorismate, which leads to the biosynthesis of aromatic amino acids. Catalyzes the reversible NADPH linked reduction of 3-dehydroshikimate (DHSA) to yield shikimate (SA). The chain is Shikimate dehydrogenase (NADP(+)) from Pectobacterium atrosepticum (strain SCRI 1043 / ATCC BAA-672) (Erwinia carotovora subsp. atroseptica).